The primary structure comprises 283 residues: Shikimate dehydrogenase (NADP(+)) (283 aa).

Residues 16–18 (SLS) and threonine 63 each bind shikimate. Residue lysine 67 is the Proton acceptor of the active site. Position 79 (aspartate 79) interacts with NADP(+). Shikimate is bound by residues asparagine 88 and aspartate 103. NADP(+) contacts are provided by residues 128-132 (GAGGA), alanine 223, and glycine 243.

It belongs to the shikimate dehydrogenase family. As to quaternary structure, homodimer.

It catalyses the reaction shikimate + NADP(+) = 3-dehydroshikimate + NADPH + H(+). Its pathway is metabolic intermediate biosynthesis; chorismate biosynthesis; chorismate from D-erythrose 4-phosphate and phosphoenolpyruvate: step 4/7. Its function is as follows. Involved in the biosynthesis of the chorismate, which leads to the biosynthesis of aromatic amino acids. Catalyzes the reversible NADPH linked reduction of 3-dehydroshikimate (DHSA) to yield shikimate (SA). In Xanthomonas campestris pv. campestris (strain 8004), this protein is Shikimate dehydrogenase (NADP(+)).